We begin with the raw amino-acid sequence, 118 residues long: Basic phospholipase A2 PA-15 (118 aa).

7 cysteine pairs are disulfide-bonded: Cys-11-Cys-71, Cys-27-Cys-117, Cys-29-Cys-45, Cys-44-Cys-98, Cys-51-Cys-91, Cys-60-Cys-84, and Cys-78-Cys-89. Ca(2+)-binding residues include Tyr-28, Gly-30, and Gly-32. His-48 is an active-site residue. Residue Asp-49 participates in Ca(2+) binding. The active site involves Asp-92.

The protein belongs to the phospholipase A2 family. Group I subfamily. D49 sub-subfamily. Ca(2+) serves as cofactor. In terms of tissue distribution, expressed by the venom gland.

Its subcellular location is the secreted. The catalysed reaction is a 1,2-diacyl-sn-glycero-3-phosphocholine + H2O = a 1-acyl-sn-glycero-3-phosphocholine + a fatty acid + H(+). PLA2 catalyzes the calcium-dependent hydrolysis of the 2-acyl groups in 3-sn-phosphoglycerides. In Pseudechis australis (Mulga snake), this protein is Basic phospholipase A2 PA-15.